Here is an 877-residue protein sequence, read N- to C-terminus: Phosphoenolpyruvate carboxylase (877 aa).

Residues H138 and K544 contribute to the active site.

This sequence belongs to the PEPCase type 1 family. Mg(2+) serves as cofactor.

It carries out the reaction oxaloacetate + phosphate = phosphoenolpyruvate + hydrogencarbonate. Forms oxaloacetate, a four-carbon dicarboxylic acid source for the tricarboxylic acid cycle. The protein is Phosphoenolpyruvate carboxylase of Vibrio vulnificus (strain CMCP6).